We begin with the raw amino-acid sequence, 259 residues long: (3R)-3-hydroxyacyl-CoA dehydrogenase (259 aa).

Residues 13–21 (LVTGAGSGI) and 40–41 (DL) each bind NAD(+). Ser-58 bears the Phosphoserine mark. Residue Lys-66 is modified to N6-acetyllysine. Position 72-74 (72-74 (ADV)) interacts with NAD(+). Residue Ser-154 coordinates substrate. Lys-158 carries the post-translational modification N6-succinyllysine. Tyr-167 acts as the Proton acceptor in catalysis. NAD(+) contacts are provided by residues 167 to 171 (YASSK) and 200 to 202 (IAT). N6-succinyllysine is present on Lys-171.

The protein belongs to the short-chain dehydrogenases/reductases (SDR) family. As to quaternary structure, heterotetramer with CBR4; contains two molecules of HSD17B8 and CBR4. In terms of tissue distribution, expressed in ovary at protein level.

The protein resides in the mitochondrion matrix. The enzyme catalyses a (3R)-3-hydroxyacyl-CoA + NAD(+) = a 3-oxoacyl-CoA + NADH + H(+). The catalysed reaction is 17beta-estradiol + NAD(+) = estrone + NADH + H(+). It carries out the reaction testosterone + NAD(+) = androst-4-ene-3,17-dione + NADH + H(+). It catalyses the reaction 17beta-hydroxy-5alpha-androstan-3-one + NAD(+) = 5alpha-androstan-3,17-dione + NADH + H(+). The protein operates within steroid biosynthesis; estrogen biosynthesis. It functions in the pathway lipid metabolism; fatty acid biosynthesis. Its pathway is lipid metabolism; mitochondrial fatty acid beta-oxidation. Required for the solubility and assembly of the heterotetramer 3-ketoacyl-[acyl carrier protein] (ACP) reductase functional complex (KAR or KAR1) that forms part of the mitochondrial fatty acid synthase (mtFAS). Alpha-subunit of the KAR complex that acts as scaffold protein required for the stability of carbonyl reductase type-4 (CBR4, beta-subunit of the KAR complex) and for its 3-ketoacyl-ACP reductase activity, thereby participating in mitochondrial fatty acid biosynthesis. Catalyzes the NAD-dependent conversion of (3R)-3-hydroxyacyl-CoA into 3-ketoacyl-CoA (3-oxoacyl-CoA) with no chain length preference; this enzymatic activity is not needed for the KAR function. Prefers (3R)-3-hydroxyacyl-CoA over (3S)-3-hydroxyacyl-CoA and displays enzymatic activity only in the presence of NAD(+). Cooperates with enoyl-CoA hydratase 1 in mitochondria, together they constitute an alternative route to the auxiliary enzyme pathways for the breakdown of Z-PUFA (cis polyunsaturated fatty acid) enoyl-esters. NAD-dependent 17-beta-hydroxysteroid dehydrogenase with highest activity towards estradiol (17beta-estradiol or E2). Has very low activity towards testosterone and dihydrotestosterone (17beta-hydroxy-5alpha-androstan-3-one). Primarily an oxidative enzyme, it can switch to a reductive mode determined in the appropriate physiologic milieu and catalyze the reduction of estrone (E1) to form biologically active 17beta-estradiol. The chain is (3R)-3-hydroxyacyl-CoA dehydrogenase (Hsd17b8) from Rattus norvegicus (Rat).